The sequence spans 164 residues: Transcriptional regulator MraZ (164 aa).

SpoVT-AbrB domains are found at residues 7–63 and 92–135; these read REQH…EPAV and LDQL…NPDR.

This sequence belongs to the MraZ family. Forms oligomers.

The protein localises to the cytoplasm. It localises to the nucleoid. This Chlorobaculum parvum (strain DSM 263 / NCIMB 8327) (Chlorobium vibrioforme subsp. thiosulfatophilum) protein is Transcriptional regulator MraZ.